The primary structure comprises 471 residues: Putative multidrug resistance protein MdtD (471 aa).

At 1-12 (MTDLPDSTRWQL) the chain is on the periplasmic side. A helical membrane pass occupies residues 13 to 33 (WIVAFGFFMQSLDTTIVNTAI). The Cytoplasmic portion of the chain corresponds to 34-48 (PSMAQSLGESPLHMH). Residues 49-69 (MVIVSYVLTVAVMLPASGWLA) traverse the membrane as a helical segment. Residues 70-76 (DKVGVRN) are Periplasmic-facing. The helical transmembrane segment at 77-97 (IFFTAIVLFTLGSLFCALSGT) threads the bilayer. Residues 98 to 101 (LNEL) lie on the Cytoplasmic side of the membrane. A helical transmembrane segment spans residues 102-124 (LLARALQGVGGAMMVPVGRLTVM). Topologically, residues 125–137 (KIVPREQYMAAMT) are periplasmic. The chain crosses the membrane as a helical span at residues 138–158 (FVTLPGQVGPLLGPALGGLLV). Over 159–164 (EYASWH) the chain is Cytoplasmic. A helical membrane pass occupies residues 165-185 (WIFLINIPVGIIGAIATLMLM). Residues 186-196 (PNYTMQTRRFD) are Periplasmic-facing. Residues 197–217 (LSGFLLLAVGMAVLTLALDGS) form a helical membrane-spanning segment. The Cytoplasmic segment spans residues 218–224 (KGTGLSP). The chain crosses the membrane as a helical span at residues 225 to 245 (LAIAGLVAVGVVALVLYLLHA). The Periplasmic portion of the chain corresponds to 246–262 (RNNNRALFSLKLFRTRT). Residues 263–283 (FSLGLAGSFAGRIGSGMLPFM) form a helical membrane-spanning segment. Residues 284-285 (TP) lie on the Cytoplasmic side of the membrane. The helical transmembrane segment at 286–306 (VFLQIGLGFSPFHAGLMMIPM) threads the bilayer. Topologically, residues 307–341 (VLGSMGMKRIVVQVVNRFGYRRVLVATTLGLSLVT) are periplasmic. Residues 342–362 (LLFMTTALLGWYYVLPFVLFL) traverse the membrane as a helical segment. Over 363-395 (QGMVNSTRFSSMNTLTLKDLPDNLASSGNSLLS) the chain is Cytoplasmic. A helical transmembrane segment spans residues 396 to 416 (MIMQLSMSIGVTIAGLLLGLF). Residues 417–430 (GSQHVSVDSGTTQT) lie on the Periplasmic side of the membrane. A helical transmembrane segment spans residues 431-451 (VFMYTWLSMAFIIALPAFIFA). Residues 452-471 (RVPNDTHQNVAISRRKRSAQ) lie on the Cytoplasmic side of the membrane.

This sequence belongs to the major facilitator superfamily. TCR/Tet family.

The protein localises to the cell inner membrane. This chain is Putative multidrug resistance protein MdtD, found in Shigella flexneri serotype 5b (strain 8401).